A 457-amino-acid polypeptide reads, in one-letter code: Bifunctional protein GlmU (457 aa).

Residues 1–230 (MPLSLPLHIV…AREVEGVNDL (230 aa)) form a pyrophosphorylase region. UDP-N-acetyl-alpha-D-glucosamine is bound by residues 12-15 (LAAG), Lys-26, Gln-78, 83-84 (GT), 105-107 (YGD), Gly-140, Glu-155, Asn-170, and Asn-228. Residue Asp-107 coordinates Mg(2+). Asn-228 lines the Mg(2+) pocket. Positions 231–251 (WQLTQLERAWQIRAARALCLQ) are linker. The tract at residues 252–457 (GARVADPARL…DSWQRPKKKT (206 aa)) is N-acetyltransferase. Positions 334 and 352 each coordinate UDP-N-acetyl-alpha-D-glucosamine. The active-site Proton acceptor is His-364. UDP-N-acetyl-alpha-D-glucosamine is bound by residues Tyr-367 and Asn-378. Acetyl-CoA contacts are provided by residues Ala-381, 387 to 388 (NY), Ser-406, Ala-424, and Arg-441.

The protein in the N-terminal section; belongs to the N-acetylglucosamine-1-phosphate uridyltransferase family. This sequence in the C-terminal section; belongs to the transferase hexapeptide repeat family. As to quaternary structure, homotrimer. Mg(2+) serves as cofactor.

Its subcellular location is the cytoplasm. The catalysed reaction is alpha-D-glucosamine 1-phosphate + acetyl-CoA = N-acetyl-alpha-D-glucosamine 1-phosphate + CoA + H(+). It catalyses the reaction N-acetyl-alpha-D-glucosamine 1-phosphate + UTP + H(+) = UDP-N-acetyl-alpha-D-glucosamine + diphosphate. The protein operates within nucleotide-sugar biosynthesis; UDP-N-acetyl-alpha-D-glucosamine biosynthesis; N-acetyl-alpha-D-glucosamine 1-phosphate from alpha-D-glucosamine 6-phosphate (route II): step 2/2. It functions in the pathway nucleotide-sugar biosynthesis; UDP-N-acetyl-alpha-D-glucosamine biosynthesis; UDP-N-acetyl-alpha-D-glucosamine from N-acetyl-alpha-D-glucosamine 1-phosphate: step 1/1. Its pathway is bacterial outer membrane biogenesis; LPS lipid A biosynthesis. Its function is as follows. Catalyzes the last two sequential reactions in the de novo biosynthetic pathway for UDP-N-acetylglucosamine (UDP-GlcNAc). The C-terminal domain catalyzes the transfer of acetyl group from acetyl coenzyme A to glucosamine-1-phosphate (GlcN-1-P) to produce N-acetylglucosamine-1-phosphate (GlcNAc-1-P), which is converted into UDP-GlcNAc by the transfer of uridine 5-monophosphate (from uridine 5-triphosphate), a reaction catalyzed by the N-terminal domain. This Xylella fastidiosa (strain 9a5c) protein is Bifunctional protein GlmU.